We begin with the raw amino-acid sequence, 341 residues long: Heat-inducible transcription repressor HrcA (341 aa).

The protein belongs to the HrcA family.

In terms of biological role, negative regulator of class I heat shock genes (grpE-dnaK-dnaJ and groELS operons). Prevents heat-shock induction of these operons. The protein is Heat-inducible transcription repressor HrcA of Corynebacterium glutamicum (strain ATCC 13032 / DSM 20300 / JCM 1318 / BCRC 11384 / CCUG 27702 / LMG 3730 / NBRC 12168 / NCIMB 10025 / NRRL B-2784 / 534).